Reading from the N-terminus, the 504-residue chain is SPbeta prophage-derived uncharacterized protein YorI (504 aa).

The chain is SPbeta prophage-derived uncharacterized protein YorI (yorI) from Bacillus subtilis (strain 168).